The sequence spans 289 residues: Inorganic pyrophosphatase (289 aa).

N-acetylserine is present on Ser-2. Lys-57 carries the post-translational modification N6-acetyllysine. Mg(2+)-binding residues include Asp-116, Asp-121, and Asp-153. N6-acetyllysine is present on Lys-228. At Ser-250 the chain carries Phosphoserine.

This sequence belongs to the PPase family. Homodimer. The cofactor is Mg(2+).

The protein resides in the cytoplasm. The catalysed reaction is diphosphate + H2O = 2 phosphate + H(+). The sequence is that of Inorganic pyrophosphatase (Ppa1) from Mus musculus (Mouse).